Here is a 130-residue protein sequence, read N- to C-terminus: Small ribosomal subunit protein uS8 (130 aa).

It belongs to the universal ribosomal protein uS8 family. In terms of assembly, part of the 30S ribosomal subunit.

Functionally, one of the primary rRNA binding proteins, it binds directly to 16S rRNA central domain where it helps coordinate assembly of the platform of the 30S subunit. The polypeptide is Small ribosomal subunit protein uS8 (Methanococcus vannielii (strain ATCC 35089 / DSM 1224 / JCM 13029 / OCM 148 / SB)).